The chain runs to 159 residues: NAD(P)H-quinone oxidoreductase subunit J, chloroplastic (159 aa).

Belongs to the complex I 30 kDa subunit family. In terms of assembly, NDH is composed of at least 16 different subunits, 5 of which are encoded in the nucleus.

It localises to the plastid. The protein localises to the chloroplast thylakoid membrane. It catalyses the reaction a plastoquinone + NADH + (n+1) H(+)(in) = a plastoquinol + NAD(+) + n H(+)(out). It carries out the reaction a plastoquinone + NADPH + (n+1) H(+)(in) = a plastoquinol + NADP(+) + n H(+)(out). NDH shuttles electrons from NAD(P)H:plastoquinone, via FMN and iron-sulfur (Fe-S) centers, to quinones in the photosynthetic chain and possibly in a chloroplast respiratory chain. The immediate electron acceptor for the enzyme in this species is believed to be plastoquinone. Couples the redox reaction to proton translocation, and thus conserves the redox energy in a proton gradient. The sequence is that of NAD(P)H-quinone oxidoreductase subunit J, chloroplastic from Brachypodium distachyon (Purple false brome).